Reading from the N-terminus, the 318-residue chain is C1GALT1-specific chaperone 1 (318 aa).

At 1 to 6 (MLSESS) the chain is on the cytoplasmic side. Residues 7 to 26 (SFLKGVMLGSIFCALITMLG) traverse the membrane as a helical; Signal-anchor for type II membrane protein segment. The Lumenal segment spans residues 27–318 (HIRIGHGSRM…FLPPNGSDND (292 aa)).

It belongs to the glycosyltransferase 31 family. Beta3-Gal-T subfamily. In terms of assembly, associates with core 1 beta-3-galactosyltransferase (C1GALT1), probably not with the soluble active form.

The protein resides in the membrane. Functionally, probable chaperone required for the generation of 1 O-glycan Gal-beta1-3GalNAc-alpha1-Ser/Thr (T antigen), which is a precursor for many extended O-glycans in glycoproteins. Probably acts as a specific molecular chaperone assisting the folding/stability of core 1 beta-3-galactosyltransferase (C1GALT1). The chain is C1GALT1-specific chaperone 1 (C1GALT1C1) from Bos taurus (Bovine).